The primary structure comprises 362 residues: 3-dehydroquinate synthase (362 aa).

NAD(+) contacts are provided by residues Asp71–Lys76, Gly105–Asp109, Thr129–Thr130, Lys142, Lys151, and Cys169–Thr172. Residues Glu184, His247, and His264 each coordinate Zn(2+).

The protein belongs to the sugar phosphate cyclases superfamily. Dehydroquinate synthase family. Requires Co(2+) as cofactor. Zn(2+) serves as cofactor. The cofactor is NAD(+).

The protein resides in the cytoplasm. The catalysed reaction is 7-phospho-2-dehydro-3-deoxy-D-arabino-heptonate = 3-dehydroquinate + phosphate. It functions in the pathway metabolic intermediate biosynthesis; chorismate biosynthesis; chorismate from D-erythrose 4-phosphate and phosphoenolpyruvate: step 2/7. Functionally, catalyzes the conversion of 3-deoxy-D-arabino-heptulosonate 7-phosphate (DAHP) to dehydroquinate (DHQ). The chain is 3-dehydroquinate synthase from Shigella flexneri serotype 5b (strain 8401).